Reading from the N-terminus, the 300-residue chain is 7-methylguanosine phosphate-specific 5'-nucleotidase (300 aa).

Asp41 acts as the Nucleophile in catalysis. The Mg(2+) site is built by Asp41 and Asp43. Asp43 serves as the catalytic Proton donor. Position 88 (Glu88) interacts with CMP. Glu88 contacts N(7)-methyl-GMP. Substrate is bound by residues 156-157 (SA) and Lys205. Asp230 contributes to the Mg(2+) binding site. An N6-acetyllysine modification is found at Lys256.

This sequence belongs to the pyrimidine 5'-nucleotidase family. Monomer.

It is found in the cytoplasm. The enzyme catalyses N(7)-methyl-GMP + H2O = N(7)-methylguanosine + phosphate. It carries out the reaction CMP + H2O = cytidine + phosphate. It catalyses the reaction a ribonucleoside 5'-phosphate + H2O = a ribonucleoside + phosphate. Specifically hydrolyzes 7-methylguanosine monophosphate (m(7)GMP) to 7-methylguanosine and inorganic phosphate. The specific activity for m(7)GMP may protect cells against undesired salvage of m(7)GMP and its incorporation into nucleic acids. Also has weak activity for CMP. UMP and purine nucleotides are poor substrates. The chain is 7-methylguanosine phosphate-specific 5'-nucleotidase (Nt5c3b) from Mus musculus (Mouse).